The following is a 206-amino-acid chain: Isochorismatase family protein 1B (206 aa).

It belongs to the isochorismatase family.

This is Isochorismatase family protein 1B from Dictyostelium discoideum (Social amoeba).